The following is a 156-amino-acid chain: Probable cyclic pyranopterin monophosphate synthase (156 aa).

Substrate contacts are provided by residues 74–76 (LCH) and 110–111 (ME). Residue D125 is part of the active site.

The protein belongs to the MoaC family. As to quaternary structure, homohexamer; trimer of dimers.

It carries out the reaction (8S)-3',8-cyclo-7,8-dihydroguanosine 5'-triphosphate = cyclic pyranopterin phosphate + diphosphate. Its pathway is cofactor biosynthesis; molybdopterin biosynthesis. Functionally, catalyzes the conversion of (8S)-3',8-cyclo-7,8-dihydroguanosine 5'-triphosphate to cyclic pyranopterin monophosphate (cPMP). The protein is Probable cyclic pyranopterin monophosphate synthase of Thermococcus onnurineus (strain NA1).